Reading from the N-terminus, the 213-residue chain is Putative 3-methyladenine DNA glycosylase (213 aa).

It belongs to the DNA glycosylase MPG family.

The sequence is that of Putative 3-methyladenine DNA glycosylase from Paraburkholderia phytofirmans (strain DSM 17436 / LMG 22146 / PsJN) (Burkholderia phytofirmans).